Here is a 66-residue protein sequence, read N- to C-terminus: DNA-directed RNA polymerase subunit Rpo10 (66 aa).

4 residues coordinate Zn(2+): Cys-7, Cys-10, Cys-47, and Cys-48.

Belongs to the archaeal Rpo10/eukaryotic RPB10 RNA polymerase subunit family. In terms of assembly, part of the RNA polymerase complex. The cofactor is Zn(2+).

Its subcellular location is the cytoplasm. It catalyses the reaction RNA(n) + a ribonucleoside 5'-triphosphate = RNA(n+1) + diphosphate. Functionally, DNA-dependent RNA polymerase (RNAP) catalyzes the transcription of DNA into RNA using the four ribonucleoside triphosphates as substrates. This Halobacterium salinarum (strain ATCC 29341 / DSM 671 / R1) protein is DNA-directed RNA polymerase subunit Rpo10.